We begin with the raw amino-acid sequence, 90 residues long: Phaiodotoxin (90 aa).

A signal peptide spans 1-18 (MKTIPLLFLLFIYFECDG). In terms of domain architecture, LCN-type CS-alpha/beta spans 19-90 (KFIRHKDESF…CFGALESKCA (72 aa)). Cystine bridges form between Cys31–Cys56, Cys41–Cys68, Cys45–Cys70, and Cys81–Cys89.

Expressed by the venom gland.

The protein localises to the secreted. Its function is as follows. Sodium channel (Nav) specific neurotoxin. Causes impairment of movement and mild paralysis in crickets at a dose of 0.5 ug per animal. A dose of 0.8 ug per cricket causes clear flaccid paralysis. A dose of 1.0 ug per cricket causes death within 2 hours. Is not toxic to mice at a dose of 100 ug per 20 g mouse weight. The chain is Phaiodotoxin from Anuroctonus phaiodactylus (Mafia scorpion).